Consider the following 363-residue polypeptide: UDP-N-acetylglucosamine--N-acetylmuramyl-(pentapeptide) pyrophosphoryl-undecaprenol N-acetylglucosamine transferase (363 aa).

Residues 13-15, Asn125, Arg166, Ser195, Ile249, 268-273, and Gln294 contribute to the UDP-N-acetyl-alpha-D-glucosamine site; these read TGG and ALTVSE.

This sequence belongs to the glycosyltransferase 28 family. MurG subfamily.

The protein localises to the cell inner membrane. The catalysed reaction is di-trans,octa-cis-undecaprenyl diphospho-N-acetyl-alpha-D-muramoyl-L-alanyl-D-glutamyl-meso-2,6-diaminopimeloyl-D-alanyl-D-alanine + UDP-N-acetyl-alpha-D-glucosamine = di-trans,octa-cis-undecaprenyl diphospho-[N-acetyl-alpha-D-glucosaminyl-(1-&gt;4)]-N-acetyl-alpha-D-muramoyl-L-alanyl-D-glutamyl-meso-2,6-diaminopimeloyl-D-alanyl-D-alanine + UDP + H(+). The protein operates within cell wall biogenesis; peptidoglycan biosynthesis. Cell wall formation. Catalyzes the transfer of a GlcNAc subunit on undecaprenyl-pyrophosphoryl-MurNAc-pentapeptide (lipid intermediate I) to form undecaprenyl-pyrophosphoryl-MurNAc-(pentapeptide)GlcNAc (lipid intermediate II). The polypeptide is UDP-N-acetylglucosamine--N-acetylmuramyl-(pentapeptide) pyrophosphoryl-undecaprenol N-acetylglucosamine transferase (Cellvibrio japonicus (strain Ueda107) (Pseudomonas fluorescens subsp. cellulosa)).